Here is a 332-residue protein sequence, read N- to C-terminus: MKTLGEFIVEKQHEFSQATGELTALLSAIKLGAKIIHRDINKAGLVDILGASGAENVQGEVQQKLDLFANEKLKAALKARDIVAGIASEEEDEIVVFEGCEHAKYVVLMDPLDGSSNIDVNVSVGTIFSIYRRVTPVGTPVTEEDFLQPGNKQVAAGYVVYGSSTMLVYTTGCGVHAFTYDPSLGVFCLCQERMRFPEKGKTYSINEGNYIKFPNGVKKYIKFCQEEDSSTSRPYTSRYIGSLVADFHRNLLKGGIYLYPSTASHPQGKLRLLYECNPMAFLAEQAGGKASDGKERILDIIPESLHQRRSFFVGNRHMVDDVERFIREYPDA.

Mg(2+)-binding residues include E89, D110, L112, and D113. Substrate-binding positions include 113–116 (DGSS), N206, Y239, 257–259 (YLY), and K269. Residue E275 participates in Mg(2+) binding.

The protein belongs to the FBPase class 1 family. As to quaternary structure, homotetramer. Requires Mg(2+) as cofactor.

It localises to the cytoplasm. The catalysed reaction is beta-D-fructose 1,6-bisphosphate + H2O = beta-D-fructose 6-phosphate + phosphate. Its pathway is carbohydrate biosynthesis; gluconeogenesis. The polypeptide is Fructose-1,6-bisphosphatase class 1 (Salmonella typhimurium (strain LT2 / SGSC1412 / ATCC 700720)).